A 709-amino-acid chain; its full sequence is Caprin-1 (709 aa).

2 stretches are compositionally biased toward low complexity: residues 1 to 15 (MPSATSHSGSGSKSS) and 22 to 43 (GSSGSEAAAGAGAAAPASQHPA). Residues 1 to 50 (MPSATSHSGSGSKSSGPPPPSGSSGSEAAAGAGAAAPASQHPATGTGAVQ) form a disordered region. At proline 2 the chain carries N-acetylproline. Position 2 is an N-acetylalanine (proline 2). The residue at position 10 (serine 10) is a Phosphoserine. Residues 60–94 (VIDKKLRNLEKKKGKLDDYQERMNKGERLNQDQLD) adopt a coiled-coil conformation. The residue at position 115 (serine 115) is a Phosphoserine. Positions 125 to 153 (KTIKKTARREQLMREEAEQKRLKTVLELQ) form a coiled coil. Position 165 is an omega-N-methylarginine (arginine 165). A disordered region spans residues 260-291 (EEAASAPAVEDQVPEAEPEPAEEYTEQSEVES). Residues 271 to 291 (QVPEAEPEPAEEYTEQSEVES) show a composition bias toward acidic residues. 2 positions are modified to phosphoserine: serine 335 and serine 343. Positions 360 to 381 (QDLMAQMQGPYNFIQDSMLDFE) are G3BP1-binding. Disordered stretches follow at residues 417 to 446 (LAQPNQVPVQPEATQVPLVSSTSEGYTASQ), 475 to 499 (TDQTTASSSLPAASQPQVFQAGTSK), and 524 to 709 (APVP…QQVN). A compositionally biased stretch (polar residues) spans 433 to 446 (PLVSSTSEGYTASQ). Composition is skewed to low complexity over residues 477–491 (QTTASSSLPAASQPQ) and 537–570 (QQNQYQASYNQSFSSQPHQVEQTELQQEQLQTVV). The span at 577 to 605 (PDQSHQVTGNHQQPPQQNTGFPRSNQPYY) shows a compositional bias: polar residues. Residue tyrosine 625 is modified to Phosphotyrosine; by EPHA4. An omega-N-methylarginine mark is found at arginine 626 and arginine 633. Tyrosine 636 and tyrosine 639 each carry phosphotyrosine; by EPHA4. Arginine 640 bears the Omega-N-methylarginine mark. Positions 642–657 (SFSNTPNSGYTQSQFS) are enriched in polar residues. Serine 644 and serine 649 each carry an O-linked (GlcNAc) serine glycan. Residues tyrosine 651, tyrosine 662, tyrosine 665, and tyrosine 670 each carry the phosphotyrosine; by EPHA4 modification. Low complexity-rich tracts occupy residues 676–686 (RGSGQSGPRGA) and 697–709 (NRGMPQMNTQQVN). Asymmetric dimethylarginine; alternate is present on arginine 698. An Omega-N-methylarginine; alternate modification is found at arginine 698.

It belongs to the caprin family. As to quaternary structure, may form homomultimers. Interacts with G3BP1; interaction is direct and promotes stress granule formation. Interacts with G3BP2; interaction is direct and promotes stress granule formation. Interacts with PQBP1. Interacts with DDX3X. Interacts (when phosphorylated by EPHA4) with FMR1; interaction with FMR1 promotes formation of a membraneless compartment. (Microbial infection) Interacts with Zika virus capsid protein C; this interaction is probably linked to the inhibition of stress granules formation by the virus. In terms of assembly, (Microbial infection) Interacts with rotavirus A non-structural protein 5; this interaction probably plays a role in the sequestration of CAPRIN1 in viral factories. As to quaternary structure, (Microbial infection) Interacts with Japanese encephalitis virus capsid protein C; this interaction is involved in the suppression of the integrated stress response by the virus. Tyrosine phosphorylation by EPHA4 promotes interaction with FMR1 and liquid-liquid phase separation (LLPS) for the formation of a membraneless compartment that concentrates mRNAs with associated regulatory factors. Post-translationally, O-glycosylated (O-GlcNAcylated), in a cell cycle-dependent manner. O-glycosylation by OGT inhibit ability to undergo liquid-liquid phase separation (LLPS). In terms of tissue distribution, ubiquitous.

Its subcellular location is the cytoplasm. The protein resides in the cytoplasmic ribonucleoprotein granule. The protein localises to the cytosol. It localises to the cell projection. It is found in the dendrite. Its subcellular location is the lamellipodium. Ability to mediate liquid-liquid phase separation is regulated by ATP: moderate concentrations of ATP enhance phase separation, whereas high concentrations of ATP lead to inhibition of phase separation. Its function is as follows. mRNA-binding protein that acts as a regulator of mRNAs transport, translation and/or stability, and which is involved in neurogenesis, synaptic plasticity in neurons and cell proliferation and migration in multiple cell types. Plays an essential role in cytoplasmic stress granule formation. Acts as an mRNA regulator by mediating formation of some phase-separated membraneless compartment: undergoes liquid-liquid phase separation upon binding to target mRNAs, leading to assemble mRNAs into cytoplasmic ribonucleoprotein granules that concentrate mRNAs with associated regulatory factors. Undergoes liquid-liquid phase separation following phosphorylation and interaction with FMR1, promoting formation of cytoplasmic ribonucleoprotein granules that concentrate mRNAs with factors that inhibit translation and mediate deadenylation of target mRNAs. In these cytoplasmic ribonucleoprotein granules, CAPRIN1 mediates recruitment of CNOT7 deadenylase, leading to mRNA deadenylation and degradation. Binds directly and selectively to MYC and CCND2 mRNAs. In neuronal cells, directly binds to several mRNAs associated with RNA granules, including BDNF, CAMK2A, CREB1, MAP2, NTRK2 mRNAs, as well as to GRIN1 and KPNB1 mRNAs, but not to rRNAs. The protein is Caprin-1 of Homo sapiens (Human).